The chain runs to 422 residues: Histidine--tRNA ligase (422 aa).

Belongs to the class-II aminoacyl-tRNA synthetase family. Homodimer.

It localises to the cytoplasm. It catalyses the reaction tRNA(His) + L-histidine + ATP = L-histidyl-tRNA(His) + AMP + diphosphate + H(+). The chain is Histidine--tRNA ligase from Aliivibrio fischeri (strain ATCC 700601 / ES114) (Vibrio fischeri).